The chain runs to 109 residues: Polyprenyl transferase subC (109 aa).

A run of 2 helical transmembrane segments spans residues 39–59 and 84–104; these read LFCV…NDWI and QAFV…HVML.

It belongs to the UbiA prenyltransferase family. Mg(2+) serves as cofactor.

The protein localises to the membrane. Its pathway is secondary metabolite biosynthesis; terpenoid biosynthesis. Polyprenyl transferase; part of the gene cluster that mediates the biosynthesis of the immunosuppressants subglutinols, meroterpenoids consisting of an alpha-pyrone (4-hydroxy-5,6-dimethyl-2-pyrone) moiety attached to a decalin core fused to a five-membered cyclic ether carrying a prenylside chain. The first step of the pathway is the synthesis of the alpha-pyrone moiety by the polyketide synthase subA via condensation of one acetyl-CoA starter unit with 3 malonyl-CoA units and 2 methylations. The alpha-pyrone is then combined with geranylgeranyl pyrophosphate (GGPP) formed by the GGPP synthase subD through the action of the prenyltransferase subC to yield a linear alpha-pyrone diterpenoid. Subsequent steps in the subglutinol biosynthetic pathway involve the decalin core formation, which is thought to be initiated by the epoxidation of the C10-C11 olefin by the FAD-dependent oxidoreductase subE. The following cyclization cascade would be catalyzed by the terpene cyclase subB. Lastly, the FAD-dependent dehydrogenase subF probably catalyzes the five-membered cyclic ether formation to complete the formation of subglutinol A. Subsequent redox reactions appear to give rise to subglutinol C and D, however, it remains unclear which enzymes are responsible for these transformations. SubD may have secondary function in the conversion of the identified subglutinols to subglutinol analog 45, which seems to be the major product of the cluster. This chain is Polyprenyl transferase subC, found in Metarhizium robertsii (strain ARSEF 23 / ATCC MYA-3075) (Metarhizium anisopliae (strain ARSEF 23)).